The chain runs to 945 residues: Isoleucine--tRNA ligase (945 aa).

Residues 66-76 (PYANGDIHLGH) carry the 'HIGH' region motif. Residue Glu581 participates in L-isoleucyl-5'-AMP binding. The 'KMSKS' region motif lies at 622–626 (KMSKS). ATP is bound at residue Lys625. Zn(2+) is bound by residues Cys908, Cys911, Cys928, and Cys931.

It belongs to the class-I aminoacyl-tRNA synthetase family. IleS type 1 subfamily. As to quaternary structure, monomer. Zn(2+) is required as a cofactor.

It localises to the cytoplasm. The enzyme catalyses tRNA(Ile) + L-isoleucine + ATP = L-isoleucyl-tRNA(Ile) + AMP + diphosphate. Functionally, catalyzes the attachment of isoleucine to tRNA(Ile). As IleRS can inadvertently accommodate and process structurally similar amino acids such as valine, to avoid such errors it has two additional distinct tRNA(Ile)-dependent editing activities. One activity is designated as 'pretransfer' editing and involves the hydrolysis of activated Val-AMP. The other activity is designated 'posttransfer' editing and involves deacylation of mischarged Val-tRNA(Ile). In Burkholderia vietnamiensis (strain G4 / LMG 22486) (Burkholderia cepacia (strain R1808)), this protein is Isoleucine--tRNA ligase.